The following is a 492-amino-acid chain: Probable Xaa-Pro aminopeptidase ACLA_020440 (492 aa).

Mn(2+) is bound by residues aspartate 272, aspartate 283, glutamate 421, and glutamate 460.

It belongs to the peptidase M24B family. The cofactor is Mn(2+).

It carries out the reaction Release of any N-terminal amino acid, including proline, that is linked to proline, even from a dipeptide or tripeptide.. Its function is as follows. Catalyzes the removal of a penultimate prolyl residue from the N-termini of peptides. This chain is Probable Xaa-Pro aminopeptidase ACLA_020440, found in Aspergillus clavatus (strain ATCC 1007 / CBS 513.65 / DSM 816 / NCTC 3887 / NRRL 1 / QM 1276 / 107).